A 182-amino-acid chain; its full sequence is Large ribosomal subunit protein uL10 (182 aa).

It belongs to the universal ribosomal protein uL10 family. In terms of assembly, part of the ribosomal stalk of the 50S ribosomal subunit. The N-terminus interacts with L11 and the large rRNA to form the base of the stalk. The C-terminus forms an elongated spine to which L12 dimers bind in a sequential fashion forming a multimeric L10(L12)X complex.

Functionally, forms part of the ribosomal stalk, playing a central role in the interaction of the ribosome with GTP-bound translation factors. The sequence is that of Large ribosomal subunit protein uL10 from Chloroflexus aurantiacus (strain ATCC 29364 / DSM 637 / Y-400-fl).